A 381-amino-acid chain; its full sequence is Erythronate-4-phosphate dehydrogenase (381 aa).

Residues Ser-45 and Thr-66 each coordinate substrate. Positions 146 and 173 each coordinate NAD(+). Arg-206 is an active-site residue. Residue Asp-230 participates in NAD(+) binding. Residue Glu-235 is part of the active site. The active-site Proton donor is His-252. Position 255 (Gly-255) interacts with NAD(+). Residue Tyr-256 participates in substrate binding.

Belongs to the D-isomer specific 2-hydroxyacid dehydrogenase family. PdxB subfamily. In terms of assembly, homodimer.

The protein localises to the cytoplasm. It carries out the reaction 4-phospho-D-erythronate + NAD(+) = (R)-3-hydroxy-2-oxo-4-phosphooxybutanoate + NADH + H(+). It functions in the pathway cofactor biosynthesis; pyridoxine 5'-phosphate biosynthesis; pyridoxine 5'-phosphate from D-erythrose 4-phosphate: step 2/5. Catalyzes the oxidation of erythronate-4-phosphate to 3-hydroxy-2-oxo-4-phosphonooxybutanoate. This chain is Erythronate-4-phosphate dehydrogenase, found in Hahella chejuensis (strain KCTC 2396).